We begin with the raw amino-acid sequence, 516 residues long: Arabinose import ATP-binding protein AraG (516 aa).

2 ABC transporter domains span residues 5–240 and 240–497; these read LRFD…MVGR and REIS…LPQS. 37–44 is a binding site for ATP; sequence GENGAGKS.

It belongs to the ABC transporter superfamily. Arabinose importer (TC 3.A.1.2.2) family. In terms of assembly, the complex is composed of two ATP-binding proteins (AraG), two transmembrane proteins (AraH) and a solute-binding protein (AraF).

It is found in the cell inner membrane. The enzyme catalyses L-arabinose(out) + ATP + H2O = L-arabinose(in) + ADP + phosphate + H(+). Part of the ABC transporter complex AraFGH involved in arabinose import. Responsible for energy coupling to the transport system. The protein is Arabinose import ATP-binding protein AraG of Paraburkholderia xenovorans (strain LB400).